A 129-amino-acid polypeptide reads, in one-letter code: uncharacterized protein (129 aa).

This is an uncharacterized protein from Streptococcus pyogenes serotype M6 (strain ATCC BAA-946 / MGAS10394).